A 260-amino-acid polypeptide reads, in one-letter code: Type II methyltransferase M.CviBI (260 aa).

S-adenosyl-L-methionine-binding residues include Trp7, Lys11, Asp54, and Asp177.

Belongs to the N(4)/N(6)-methyltransferase family.

The enzyme catalyses a 2'-deoxyadenosine in DNA + S-adenosyl-L-methionine = an N(6)-methyl-2'-deoxyadenosine in DNA + S-adenosyl-L-homocysteine + H(+). Functionally, a alpha subtype methylase, recognizes the double-stranded sequence 5'-GANTC-3', methylates A-2 on both strands, and protects the DNA from cleavage by the CviBI endonuclease. In Paramecium bursaria Chlorella virus NC1A (PBCV-NC1A), this protein is Type II methyltransferase M.CviBI.